The primary structure comprises 248 residues: Pulmonary surfactant-associated protein A (248 aa).

Positions 1-17 are cleaved as a signal peptide; the sequence is MWLRCLALALTLLMVSG. A glycan (N-linked (GlcNAc...) asparagine) is linked at asparagine 20. Residues 28 to 100 form the Collagen-like domain; sequence GNPGIPGTPG…PGERGPPGLP (73 aa). Positions 29–103 are disordered; sequence NPGIPGTPGS…RGPPGLPASL (75 aa). Residues proline 30, proline 33, proline 36, proline 42, proline 54, proline 57, proline 63, proline 67, and proline 70 each carry the 4-hydroxyproline modification. The span at 42-51 shows a compositional bias: basic and acidic residues; it reads PGRDGRDGVK. Residues 54–65 are compositionally biased toward pro residues; that stretch reads PGPPGPLGPPGG. A compositionally biased stretch (basic and acidic residues) spans 84-93; the sequence is ERGEKGEPGE. The region spanning 132 to 248 is the C-type lectin domain; it reads LVVGRKVFSS…LQYRLAICEF (117 aa). Disulfide bonds link cysteine 155–cysteine 246 and cysteine 224–cysteine 238. The N-linked (GlcNAc...) asparagine glycan is linked to asparagine 207. Ca(2+)-binding residues include glutamate 215, arginine 217, and asparagine 234.

This sequence belongs to the SFTPA family. As to quaternary structure, oligomeric complex of 6 set of homotrimers.

The protein localises to the secreted. It localises to the extracellular space. It is found in the extracellular matrix. Its subcellular location is the surface film. Functionally, in presence of calcium ions, it binds to surfactant phospholipids and contributes to lower the surface tension at the air-liquid interface in the alveoli of the mammalian lung and is essential for normal respiration. Enhances the expression of MYO18A/SP-R210 on alveolar macrophages. This is Pulmonary surfactant-associated protein A (SFTPA1) from Canis lupus familiaris (Dog).